A 312-amino-acid polypeptide reads, in one-letter code: DNA-directed RNA polymerase subunit alpha (312 aa).

The interval 1–226 (MIEFEKPTIT…EHLGLFTDLT (226 aa)) is alpha N-terminal domain (alpha-NTD). The alpha C-terminal domain (alpha-CTD) stretch occupies residues 242–312 (SDDRMLDRTI…DLGLGLKKDK (71 aa)).

It belongs to the RNA polymerase alpha chain family. As to quaternary structure, homodimer. The RNAP catalytic core consists of 2 alpha, 1 beta, 1 beta' and 1 omega subunit. When a sigma factor is associated with the core the holoenzyme is formed, which can initiate transcription.

The enzyme catalyses RNA(n) + a ribonucleoside 5'-triphosphate = RNA(n+1) + diphosphate. Its function is as follows. DNA-dependent RNA polymerase catalyzes the transcription of DNA into RNA using the four ribonucleoside triphosphates as substrates. This Streptococcus suis (strain 98HAH33) protein is DNA-directed RNA polymerase subunit alpha.